The primary structure comprises 309 residues: Golgi to ER traffic protein 4 homolog (309 aa).

Residues 290–309 form a disordered region; it reads SGGGLASMEVDGPTIEDEMD.

The protein belongs to the GET4 family.

Functionally, may play a role in insertion of tail-anchored proteins into the endoplasmic reticulum membrane. The sequence is that of Golgi to ER traffic protein 4 homolog from Dictyostelium discoideum (Social amoeba).